The primary structure comprises 630 residues: Cytochrome B pre-mRNA-processing protein 2 (630 aa).

The protein localises to the mitochondrion. Appears to be specifically required for the splicing of the terminal intron (bI5) of the cytochrome b pre-mRNA. Can also stimulates the splicing of the omega intron of the precursor of large ribosomal RNA. The protein is Cytochrome B pre-mRNA-processing protein 2 (CBP2) of Saccharomyces cerevisiae (strain ATCC 204508 / S288c) (Baker's yeast).